Here is a 157-residue protein sequence, read N- to C-terminus: 6,7-dimethyl-8-ribityllumazine synthase (157 aa).

Residues Phe-22, 57–59 (AYE), and 81–83 (TVI) each bind 5-amino-6-(D-ribitylamino)uracil. A (2S)-2-hydroxy-3-oxobutyl phosphate-binding site is contributed by 86–87 (GT). The Proton donor role is filled by His-89. Phe-114 is a binding site for 5-amino-6-(D-ribitylamino)uracil. Residue Arg-128 participates in (2S)-2-hydroxy-3-oxobutyl phosphate binding.

This sequence belongs to the DMRL synthase family. As to quaternary structure, forms an icosahedral capsid composed of 60 subunits, arranged as a dodecamer of pentamers.

The catalysed reaction is (2S)-2-hydroxy-3-oxobutyl phosphate + 5-amino-6-(D-ribitylamino)uracil = 6,7-dimethyl-8-(1-D-ribityl)lumazine + phosphate + 2 H2O + H(+). The protein operates within cofactor biosynthesis; riboflavin biosynthesis; riboflavin from 2-hydroxy-3-oxobutyl phosphate and 5-amino-6-(D-ribitylamino)uracil: step 1/2. Catalyzes the formation of 6,7-dimethyl-8-ribityllumazine by condensation of 5-amino-6-(D-ribitylamino)uracil with 3,4-dihydroxy-2-butanone 4-phosphate. This is the penultimate step in the biosynthesis of riboflavin. This Haemophilus influenzae (strain 86-028NP) protein is 6,7-dimethyl-8-ribityllumazine synthase.